Here is a 304-residue protein sequence, read N- to C-terminus: Oxygen-dependent coproporphyrinogen-III oxidase (304 aa).

Ser-93 provides a ligand contact to substrate. A divalent metal cation is bound by residues His-97 and His-107. The active-site Proton donor is the His-107. 109-111 (NVR) serves as a coordination point for substrate. Positions 146 and 176 each coordinate a divalent metal cation. An important for dimerization region spans residues 241–276 (YVEFNLVYDRGTLFGLQSGGRTESILMSLPPQVRWG). Residue 259–261 (GGR) coordinates substrate.

The protein belongs to the aerobic coproporphyrinogen-III oxidase family. In terms of assembly, homodimer. A divalent metal cation is required as a cofactor.

It localises to the cytoplasm. The enzyme catalyses coproporphyrinogen III + O2 + 2 H(+) = protoporphyrinogen IX + 2 CO2 + 2 H2O. It functions in the pathway porphyrin-containing compound metabolism; protoporphyrin-IX biosynthesis; protoporphyrinogen-IX from coproporphyrinogen-III (O2 route): step 1/1. Functionally, involved in the heme biosynthesis. Catalyzes the aerobic oxidative decarboxylation of propionate groups of rings A and B of coproporphyrinogen-III to yield the vinyl groups in protoporphyrinogen-IX. The sequence is that of Oxygen-dependent coproporphyrinogen-III oxidase from Pseudomonas savastanoi pv. phaseolicola (strain 1448A / Race 6) (Pseudomonas syringae pv. phaseolicola (strain 1448A / Race 6)).